The primary structure comprises 430 residues: Multisubstrate adapter protein soc-1 (430 aa).

The region spanning 7 to 133 (NIILEGSLKR…WVNEICKLCK (127 aa)) is the PH domain. Low complexity predominate over residues 192–222 (SHNSLPSNPNYNNLPDPLESSRSETSSMYSS). 3 disordered regions span residues 192–246 (SHNS…TRHT), 275–303 (EDAE…SEGF), and 315–377 (RRAP…RNLD). The segment covering 341-369 (RNLSRNGVNENGNYSATFSSRTSNYQQSE) has biased composition (polar residues).

Interacts (via C-terminus) with sem-5 (probably via SH3 domain 2). Interacts with nicotinic acetylcholine receptor. May be phosphorylated.

Its function is as follows. Adapter protein which modulates signaling mediated by several receptor tyrosine kinases. Plays a role in fluid homeostasis, probably downstream of receptor egl-15 and upstream of let-60/Ras. Involved in nicotinic acetylcholine receptor (nAChR)-mediated sensitivity to nicotine and levamisole and gamma-aminobutyric acid (GABA)receptor-mediated sensitivity to muscimol. Regulates synaptic levels of nAchR receptor subunit lev-1 and unc-38, and GABA receptor subunit unc-49 in the nerve cord, probably downstream of egl-15. Regulates motility. During the formation of neuromuscular junctions at the larval stage, down-regulates membrane protrusion from body wall muscles, probably downstream of egl-15. Promotes vulva induction and down-regulates fertility, probably downstream of receptor let-23. Down-regulates daf-2-mediated repression of dauer formation and positively regulates daf-2-mediated aging. May be involved in the recruitment of phosphatase ptp-2 to egl-15. The polypeptide is Multisubstrate adapter protein soc-1 (Caenorhabditis elegans).